The sequence spans 259 residues: Glutamate racemase (259 aa).

Residues 12-13 and 44-45 each bind substrate; these read DS and YG. Catalysis depends on Cys75, which acts as the Proton donor/acceptor. 76 to 77 contacts substrate; that stretch reads NT. Catalysis depends on Cys186, which acts as the Proton donor/acceptor. Position 187-188 (187-188) interacts with substrate; sequence TH.

This sequence belongs to the aspartate/glutamate racemases family.

The enzyme catalyses L-glutamate = D-glutamate. The protein operates within cell wall biogenesis; peptidoglycan biosynthesis. Provides the (R)-glutamate required for cell wall biosynthesis. The sequence is that of Glutamate racemase from Clostridium novyi (strain NT).